The sequence spans 178 residues: Large ribosomal subunit protein bL35m (178 aa).

The protein belongs to the bacterial ribosomal protein bL35 family.

The protein resides in the mitochondrion. This chain is Large ribosomal subunit protein bL35m (mRpL35), found in Drosophila melanogaster (Fruit fly).